The following is a 1108-amino-acid chain: Isoleucine--tRNA ligase (1108 aa).

The 'HIGH' region motif lies at 53–63 (PFANGLPHYGH). The short motif at 654–658 (KLSKR) is the 'KMSKS' region element. Lysine 657 provides a ligand contact to ATP.

Belongs to the class-I aminoacyl-tRNA synthetase family. IleS type 2 subfamily. As to quaternary structure, monomer. Zn(2+) serves as cofactor.

It is found in the cytoplasm. The catalysed reaction is tRNA(Ile) + L-isoleucine + ATP = L-isoleucyl-tRNA(Ile) + AMP + diphosphate. Catalyzes the attachment of isoleucine to tRNA(Ile). As IleRS can inadvertently accommodate and process structurally similar amino acids such as valine, to avoid such errors it has two additional distinct tRNA(Ile)-dependent editing activities. One activity is designated as 'pretransfer' editing and involves the hydrolysis of activated Val-AMP. The other activity is designated 'posttransfer' editing and involves deacylation of mischarged Val-tRNA(Ile). In Rickettsia bellii (strain OSU 85-389), this protein is Isoleucine--tRNA ligase.